The following is an 84-amino-acid chain: Translation initiation factor IF-1, chloroplastic (84 aa).

Residues 1 to 72 (MKKQNLVEME…SKGRITYRLR (72 aa)) enclose the S1-like domain.

Belongs to the IF-1 family. As to quaternary structure, component of the 30S ribosomal translation pre-initiation complex which assembles on the 30S ribosome in the order IF-2 and IF-3, IF-1 and N-formylmethionyl-tRNA(fMet); mRNA recruitment can occur at any time during PIC assembly.

It is found in the plastid. Its subcellular location is the chloroplast. In terms of biological role, one of the essential components for the initiation of protein synthesis. Stabilizes the binding of IF-2 and IF-3 on the 30S subunit to which N-formylmethionyl-tRNA(fMet) subsequently binds. Helps modulate mRNA selection, yielding the 30S pre-initiation complex (PIC). Upon addition of the 50S ribosomal subunit IF-1, IF-2 and IF-3 are released leaving the mature 70S translation initiation complex. This is Translation initiation factor IF-1, chloroplastic from Spirogyra maxima (Green alga).